Reading from the N-terminus, the 863-residue chain is Disintegrin and metalloproteinase domain-containing protein 15 (863 aa).

A signal peptide spans 1 to 17 (MRLALLWALGLLGAGSP). The propeptide occupies 18-206 (LPSWPLPNIG…LGQRHIRRRR (189 aa)). A disordered region spans residues 22-45 (PLPNIGGTEEQQAESEKAPREPLE). Residues 35–44 (ESEKAPREPL) are compositionally biased toward basic and acidic residues. Residues 177–184 (HTCALSWR) carry the Cysteine switch motif. Position 179 (C179) interacts with Zn(2+). Topologically, residues 207–696 (DVVTETKTVE…QLKATSSLTT (490 aa)) are extracellular. Residues 213–414 (KTVELVIVAD…GMGSCLFERL (202 aa)) enclose the Peptidase M12B domain. N237 carries an N-linked (GlcNAc...) asparagine glycan. 4 cysteine pairs are disulfide-bonded: C323-C409, C365-C393, C367-C376, and C480-C500. H348 contributes to the Zn(2+) binding site. E349 is a catalytic residue. Residues H352 and H358 each coordinate Zn(2+). 2 N-linked (GlcNAc...) asparagine glycosylation sites follow: N389 and N392. Positions 421–508 (AAFCGNMFVE…QCPPDVSLGD (88 aa)) constitute a Disintegrin domain. A Cell attachment site motif is present at residues 484–486 (RGD). N-linked (GlcNAc...) asparagine glycans are attached at residues N606 and N611. Cystine bridges form between C657–C667, C661–C673, and C675–C684. The region spanning 657–685 (CRSKCHGHGVCDSNRHCYCEEGWAPPDCT) is the EGF-like domain. The chain crosses the membrane as a helical span at residues 697-717 (GLLLSLLVLLVLVMLGASYWY). A phosphotyrosine; by HCK and LCK mark is found at Y715 and Y735. Topologically, residues 718–863 (RARLHQRLCQ…PPPTVSSLYL (146 aa)) are cytoplasmic. Residues 736–863 (RAAQSGPSER…PPPTVSSLYL (128 aa)) are disordered. A compositionally biased stretch (pro residues) spans 767 to 778 (PAPPSRPLPPDP). Residues 779–789 (VSKRLQAELAD) show a composition bias toward basic and acidic residues. Composition is skewed to pro residues over residues 791 to 800 (PNPPTRPLPA) and 813 to 824 (AKPPPPRKPLPA). 2 consecutive short sequence motifs (SH3-binding) follow at residues 815 to 821 (PPPPRKP) and 850 to 856 (RPAPPPP).

In terms of assembly, interacts with ITAGV-ITGB3 (vitronectin receptor). Interacts with SH3GL2 and SNX9; this interaction occurs preferentially with ADAM15 precursor, rather than the processed form, suggesting it occurs in a secretory pathway compartment prior to the medial Golgi. Interacts with ITAG9-ITGB1. Interacts specifically with Src family protein-tyrosine kinases (PTKs). Interacts with SH3PXD2A. Interacts with ITAGV-ITGB1. Interacts with GRB2, HCK, ITSN1, ITSN2, LYN, MAPK1, MAPK3, NCF1, NCK1, nephrocystin, PTK6, SNX33, LCK and SRC. Zn(2+) serves as cofactor. The precursor is cleaved by a furin endopeptidase. Post-translationally, phosphorylation increases association with PTKs. In terms of tissue distribution, expressed in colon and small intestine. Expressed in airway smooth muscle and glomerular mesangial cells (at protein level). Ubiquitously expressed. Overexpressed in atherosclerotic lesions. Constitutively expressed in cultured endothelium and smooth muscle. Expressed in chondrocytes. Expressed in airway smooth muscle and glomerular mesangial cells.

The protein resides in the endomembrane system. The protein localises to the cell junction. It localises to the adherens junction. Its subcellular location is the cell projection. It is found in the cilium. The protein resides in the flagellum. The protein localises to the cytoplasmic vesicle. It localises to the secretory vesicle. Its subcellular location is the acrosome. With respect to regulation, inhibited by hydroxamate-type metalloproteinase inhibitors such as marimastat. Inhibited by metalloproteinase inhibitor 2 (TIMP-2) and TIMP-3 at nanomolar concentrations. Not significantly inhibited by TIMP-1 at concentrations of up to 100 nM. Not activated by PMA or ionomycin. Functionally, active metalloproteinase with gelatinolytic and collagenolytic activity. Plays a role in the wound healing process. Mediates both heterotypic intraepithelial cell/T-cell interactions and homotypic T-cell aggregation. Inhibits beta-1 integrin-mediated cell adhesion and migration of airway smooth muscle cells. Suppresses cell motility on or towards fibronectin possibly by driving alpha-v/beta-1 integrin (ITAGV-ITGB1) cell surface expression via ERK1/2 inactivation. Cleaves E-cadherin in response to growth factor deprivation. Plays a role in glomerular cell migration. Plays a role in pathological neovascularization. May play a role in cartilage remodeling. May be proteolytically processed, during sperm epididymal maturation and the acrosome reaction. May play a role in sperm-egg binding through its disintegrin domain. The polypeptide is Disintegrin and metalloproteinase domain-containing protein 15 (ADAM15) (Homo sapiens (Human)).